Here is a 426-residue protein sequence, read N- to C-terminus: Pannexin-1 (426 aa).

Residues 1-40 (MAIAHLATEYVFSDFLLKEPTEPKFKGLRLELAVDKMVTC) are Cytoplasmic-facing. Residue Cys40 is modified to S-nitrosocysteine. The chain crosses the membrane as a helical span at residues 41 to 61 (IAVGLPLLLISLAFAQEISIG). Over 62-106 (TQISCFSPSSFSWRQAAFVDSYCWAAVQQKNSLQSESGNLPLWLH) the chain is Extracellular. Intrachain disulfides connect Cys66–Cys264 and Cys84–Cys245. The helical transmembrane segment at 107 to 127 (KFFPYILLLFAILLYLPALFW) threads the bilayer. Residues 128 to 216 (RFAAAPHLCS…HLIMKYISCR (89 aa)) lie on the Cytoplasmic side of the membrane. The residue at position 198 (Tyr198) is a Phosphotyrosine. Residues 217–237 (LVTFAVVLLACIYLSYYFSLS) form a helical membrane-spanning segment. The Extracellular portion of the chain corresponds to 238-277 (SLSDEFLCSIKSGVLRNDSTIPDSFQCKLIAVGIFQLLSL). The N-linked (GlcNAc...) asparagine glycan is linked to Asn254. A helical transmembrane segment spans residues 278–298 (INLLVYALLVPVVIYTLFVPF). Residues 299-426 (RQKTDVLKVY…SRQRLLNSSC (128 aa)) are Cytoplasmic-facing. Cys346 carries the post-translational modification S-nitrosocysteine. Residues 407–426 (ETAANNGEKNSRQRLLNSSC) are disordered.

Belongs to the pannexin family. Homoheptameric. Post-translationally, S-nitrosylation inhibits channel currents and ATP release. In terms of processing, N-glycosylation plays a role in cell surface targeting. Glycosylation at its extracellular surface makes unlikely that two oligomers could dock to form an intercellular channel such as in gap junctions. Exists in three glycosylation states: non-glycosylated (GLY0), high-mannose glycosylated (GLY1), and fully mature glycosylated (GLY2). Cleaved by CASP3 and CASP7 during apoptosis. Cleavage opens the channel for the release of metabolites and induces plasma membrane permeability during apoptosis. Post-translationally, phosphorylated at Tyr-198 by SRC. Phosphorylation activates ATP release. Constitutively phosphorylated in vascular smooth muscle cells. In terms of tissue distribution, expressed in the eye, thyroid, prostate, kidney and liver. Abundantly expressed in the CNS, including hippocampus, olfactory bulb, cortex, cerebellum and white matter.

The protein resides in the cell membrane. Its subcellular location is the endoplasmic reticulum membrane. The enzyme catalyses Ca(2+)(in) = Ca(2+)(out). The catalysed reaction is ATP(in) = ATP(out). It catalyses the reaction K(+)(in) = K(+)(out). It carries out the reaction chloride(in) = chloride(out). The enzyme catalyses iodide(out) = iodide(in). The catalysed reaction is Na(+)(in) = Na(+)(out). It catalyses the reaction nitrate(in) = nitrate(out). It carries out the reaction L-aspartate(out) = L-aspartate(in). The enzyme catalyses L-glutamate(out) = L-glutamate(in). The catalysed reaction is D-gluconate(in) = D-gluconate(out). It catalyses the reaction spermidine(in) = spermidine(out). Ion channel involved in a variety of physiological functions such as blood pressure regulation, apoptotic cell clearance and oogenesis. Forms anion-selective channels with relatively low conductance and an order of permeabilities: nitrate&gt;iodide&gt;chlroride&gt;&gt;aspartate=glutamate=gluconate. Can release ATP upon activation through phosphorylation or cleavage at C-terminus. May play a role as a Ca(2+)-leak channel to regulate ER Ca(2+) homeostasis. Functionally, during apoptosis, the C terminal tail is cleaved by caspases, which opens the main pore acting as a large-pore ATP efflux channel with a broad distribution, which allows the regulated release of molecules and ions smaller than 1 kDa, such as nucleotides ATP and UTP, and selective plasma membrane permeability to attract phagocytes that engulf the dying cells. This chain is Pannexin-1 (Panx1), found in Rattus norvegicus (Rat).